The chain runs to 141 residues: Large ribosomal subunit protein uL11 (141 aa).

It belongs to the universal ribosomal protein uL11 family. In terms of assembly, part of the ribosomal stalk of the 50S ribosomal subunit. Interacts with L10 and the large rRNA to form the base of the stalk. L10 forms an elongated spine to which L12 dimers bind in a sequential fashion forming a multimeric L10(L12)X complex. In terms of processing, one or more lysine residues are methylated.

Forms part of the ribosomal stalk which helps the ribosome interact with GTP-bound translation factors. This is Large ribosomal subunit protein uL11 from Synechococcus sp. (strain CC9605).